Here is a 324-residue protein sequence, read N- to C-terminus: Methyltransferase pytC (324 aa).

The interval 1 to 28 (MTVRTAAEPPNRIEVDMDAPSLDTDSSC) is disordered.

This sequence belongs to the methyltransferase superfamily. LaeA methyltransferase family.

It functions in the pathway secondary metabolite biosynthesis. Its function is as follows. Methyltransferase; part of the gene cluster that mediates the biosynthesis of pyranterreones, a family of antioxidative compounds. The first step of pyranonigrins biosynthesis is performed by the hybrid PKS-NRPS synthetase pytA that condenses 4 malonyl-CoA units ato the acetyl starter unit by the modular PKS of pytA. The acyl chain is then connected to an L-serine through the amide bond by the modular NRPS of pytA. A tetramic acid is formed and released from the PKS-NRPS pytA to give pyranterreone 5 with the help of the thioesterase pytI. Pyranterreone 5 could be methylated by pytC to afford pyranterreone 6. Both pyranterreones 5 and 6 are subsequently oxidized by the FAD-linked oxidoreductase pytB and the cytochrome P450 monooxygenase pytD to form the fused gamma-pyrone core, resulting in pyranterreones 7 and 11, respectively. The hydroxy group at C-8 of pyranterreones 7 and 11 are dehydrated by the aspartyl protease pytH to form a delta-7 double bond to give pyranterreones 3 and 1, 2 accordingly. The exo-methylene of pyranterreone 3 could be reduced into a pendant methyl by reductase pytE to provide pyranterreone 4, also known as cordylactam. Pyranterreone 4 can be reconverted to pyranterreone 3 through pytB-catalyzed dehydrogenation or further oxidized to pyranterreones 9 and 10. The protein is Methyltransferase pytC of Aspergillus terreus.